A 189-amino-acid chain; its full sequence is Probable nicotinate-nucleotide adenylyltransferase (189 aa).

The protein belongs to the NadD family.

The enzyme catalyses nicotinate beta-D-ribonucleotide + ATP + H(+) = deamido-NAD(+) + diphosphate. It functions in the pathway cofactor biosynthesis; NAD(+) biosynthesis; deamido-NAD(+) from nicotinate D-ribonucleotide: step 1/1. Catalyzes the reversible adenylation of nicotinate mononucleotide (NaMN) to nicotinic acid adenine dinucleotide (NaAD). This chain is Probable nicotinate-nucleotide adenylyltransferase, found in Bacillus anthracis (strain CDC 684 / NRRL 3495).